The following is a 99-amino-acid chain: Endothelin receptor type B (99 aa).

The Extracellular segment spans residues 1 to 8 (PFGAEMCK). A disulfide bridge links C7 with C88. The helical transmembrane segment at 9 to 30 (LVPFIQKASVGITVLSLCALSI) threads the bilayer. The Cytoplasmic portion of the chain corresponds to 31-51 (DRYRAVASWSRIKGIGIPKWT). Residues 52–76 (AVEIVLIWVVSVVLAVPEAIGFDMI) traverse the membrane as a helical segment. Residues 77–99 (TMDYKGSYLRICLLHPVQKTAFM) lie on the Extracellular side of the membrane.

Belongs to the G-protein coupled receptor 1 family. Endothelin receptor subfamily. EDNRB sub-subfamily.

It localises to the cell membrane. Functionally, non-specific receptor for endothelin 1, 2, and 3. Mediates its action by association with G proteins that activate a phosphatidylinositol-calcium second messenger system. The sequence is that of Endothelin receptor type B (EDNRB) from Macaca fascicularis (Crab-eating macaque).